Reading from the N-terminus, the 1073-residue chain is Pleckstrin homology domain-containing family G member 5 (1073 aa).

Disordered regions lie at residues 1 to 28 (MGTG…SQLL), 91 to 135 (VSTR…ARRR), 217 to 261 (PGDE…ESSL), 278 to 309 (GEAG…GINE), and 367 to 388 (SWEE…RLED). 2 stretches are compositionally biased toward basic and acidic residues: residues 217 to 231 (PGDE…KDSK) and 249 to 260 (ERVDPQSRRESS). Residues 367–381 (SWEEEEEDDEEDEES) show a composition bias toward acidic residues. In terms of domain architecture, DH spans 406–598 (HQQEAVWELL…ERFIHHVNTC (193 aa)). Positions 654–754 (QLLLEGSLRM…WVDTIYNAQN (101 aa)) constitute a PH domain. Disordered regions lie at residues 762-818 (QLSA…TSDG), 833-873 (TLSS…GPVD), and 899-925 (PVVE…TPVQ). Positions 777 to 790 (LEEEEDEQEEEGEE) are enriched in acidic residues. Composition is skewed to polar residues over residues 791 to 809 (SGTS…SNSL) and 844 to 864 (VSSQ…TPTS). Thr-793 carries the post-translational modification Phosphothreonine. Ser-798 is subject to Phosphoserine. Pro residues predominate over residues 900–915 (VVEPAPVPQTPSPQPS). Thr-909 carries the post-translational modification Phosphothreonine. 3 positions are modified to phosphoserine: Ser-911, Ser-936, and Ser-941. Residues 993–1046 (MCDPCHGPQLSESENRPSHMTGGPADSARRRCREMPSGTMSRVQSEPPSGVSAQ) are disordered. Over residues 1030–1039 (GTMSRVQSEP) the composition is skewed to polar residues.

Interacts with GIPC1/synectin and RHOA. Expressed in neurons and glial cells of the peripheral nervous system, with highest levels of expression in the brain and sciatic nerve endoneurium. Isoform 2 is expressed at detectable levels only in malignant cells.

Its subcellular location is the cytoplasm. It is found in the perinuclear region. It localises to the cell membrane. The protein resides in the cell junction. The protein localises to the cell projection. Its subcellular location is the lamellipodium. Functions as a guanine exchange factor (GEF) for RAB26 and thus regulates autophagy of synaptic vesicles in axon terminal of motoneurons. Involved in the control of neuronal cell differentiation. Plays a role in angiogenesis through regulation of endothelial cells chemotaxis. Also affects the migration, adhesion, and matrix/bone degradation in macrophages and osteoclasts. In Mus musculus (Mouse), this protein is Pleckstrin homology domain-containing family G member 5 (Plekhg5).